A 172-amino-acid chain; its full sequence is C-phycocyanin beta subunit (172 aa).

Asn-72 carries the N4-methylasparagine modification. Residues Cys-82 and Cys-153 each contribute to the (2R,3E)-phycocyanobilin site.

Belongs to the phycobiliprotein family. Heterodimer of an alpha and a beta subunit, which further assembles into trimers and the trimers into hexamers. Post-translationally, contains two covalently linked bilin chromophores.

It is found in the cellular thylakoid membrane. In terms of biological role, light-harvesting photosynthetic bile pigment-protein from the phycobiliprotein complex (phycobilisome, PBS). Phycocyanin is the major phycobiliprotein in the PBS rod. The chain is C-phycocyanin beta subunit (cpcB) from Synechocystis sp. (strain PCC 6701).